A 218-amino-acid chain; its full sequence is Dual specificity protein phosphatase TpbA (218 aa).

A signal peptide spans 1–28 (MHRSPLAWLRLLLAAVLGAFLLGGPLHA). The region spanning 44–188 (DPSINLYRMS…YVRGADVDGL (145 aa)) is the Tyrosine-protein phosphatase domain. D105 functions as the Proton donor/acceptor in the catalytic mechanism. Catalysis depends on C132, which acts as the Phosphocysteine intermediate.

It belongs to the protein-tyrosine phosphatase family. Monomer in solution.

The protein resides in the periplasm. It carries out the reaction O-phospho-L-tyrosyl-[protein] + H2O = L-tyrosyl-[protein] + phosphate. It catalyses the reaction O-phospho-L-threonyl-[protein] + H2O = L-threonyl-[protein] + phosphate. The enzyme catalyses O-phospho-L-seryl-[protein] + H2O = L-seryl-[protein] + phosphate. The phosphatase activity is completely inhibited by trisodium orthovanadate, a tyrosine phosphatase specific inhibitor. Phosphatase that regulates diverse phenotypes in P.aeruginosa via regulation of the concentration of cellular c-di-GMP. Acts by dephosphorylating the membrane-anchored diguanylate cyclase TpbB at tyrosine and serine/threonine sites, leading to inactivation of TpbB and reduced c-di-GMP production. The reduced cellular c-di-GMP concentration leads to reduced adhesin expression, reduced extracellular polysaccharide (EPS) production, pellicule production, cell aggregation and biofilm formation, and enhanced swimming and swarming. It affects colony morphology and controls rugose colony formation. TpbA also acts as a positive regulator of extracellular DNA (eDNA, a major component of the biofilm matrix) and cell lysis by reducing c-di-GMP concentrations. In vitro shows phosphatase activity toward p-nitrophenyl phosphate (pNPP), tyrosine phosphopeptides and a threonine phosphopeptide. Does not have phosphodiesterases (PDE) activity, and cannot degrade c-di-GMP. The chain is Dual specificity protein phosphatase TpbA from Pseudomonas aeruginosa (strain UCBPP-PA14).